The following is a 146-amino-acid chain: Hemoglobin subunit beta (146 aa).

Position 1 is an N-acetylvaline (V1). One can recognise a Globin domain in the interval 2 to 146 (HLTAEEKAAV…VANALAHKYH (145 aa)). At T12 the chain carries Phosphothreonine. A Phosphoserine modification is found at S44. K59 bears the N6-acetyllysine mark. H63 is a heme b binding site. The residue at position 82 (K82) is an N6-acetyllysine. Position 92 (H92) interacts with heme b. C93 bears the S-nitrosocysteine mark. K144 carries the post-translational modification N6-acetyllysine.

This sequence belongs to the globin family. In terms of assembly, heterotetramer of two alpha chains and two beta chains. In terms of tissue distribution, red blood cells.

Its function is as follows. Involved in oxygen transport from the lung to the various peripheral tissues. The sequence is that of Hemoglobin subunit beta (HBB) from Mellivora capensis (Ratel).